A 251-amino-acid chain; its full sequence is MIKVIICGALGRMGTMIANMVIENPELEFVGGVDIRDGTVLGKPVVPSEKLAAFIDEVKPDVMIDFTVAAATMINAKIAAKKGVALVIGTTGFTPEQDAELLDAIKNVPVVKTTNFSVGVNIFWELVRDAASRLGDYDIEVIEAHHRYKKDAPSGTAKTILKVIQEEVGKREEMYGREGMTERKNEIGVHVIRGGDVVGDHTVQFHQNYETIELTHRAYDRAVFARGAIRAAAWVPKAKPGVYTMKEVLGL.

8–13 (GALGRM) provides a ligand contact to NAD(+). Arg36 lines the NADP(+) pocket. NAD(+)-binding positions include 89-91 (GTT) and 113-116 (TTNF). His145 (proton donor/acceptor) is an active-site residue. His146 serves as a coordination point for (S)-2,3,4,5-tetrahydrodipicolinate. The active-site Proton donor is Lys149. (S)-2,3,4,5-tetrahydrodipicolinate is bound at residue 155-156 (GT).

Belongs to the DapB family.

It localises to the cytoplasm. It catalyses the reaction (S)-2,3,4,5-tetrahydrodipicolinate + NAD(+) + H2O = (2S,4S)-4-hydroxy-2,3,4,5-tetrahydrodipicolinate + NADH + H(+). It carries out the reaction (S)-2,3,4,5-tetrahydrodipicolinate + NADP(+) + H2O = (2S,4S)-4-hydroxy-2,3,4,5-tetrahydrodipicolinate + NADPH + H(+). The protein operates within amino-acid biosynthesis; L-lysine biosynthesis via DAP pathway; (S)-tetrahydrodipicolinate from L-aspartate: step 4/4. In terms of biological role, catalyzes the conversion of 4-hydroxy-tetrahydrodipicolinate (HTPA) to tetrahydrodipicolinate. The chain is 4-hydroxy-tetrahydrodipicolinate reductase from Methanocorpusculum labreanum (strain ATCC 43576 / DSM 4855 / Z).